A 424-amino-acid polypeptide reads, in one-letter code: Trigger factor (424 aa).

The PPIase FKBP-type domain occupies 163 to 248; it reads GDTVVLDFEG…IHEIKAKELP (86 aa).

It belongs to the FKBP-type PPIase family. Tig subfamily.

Its subcellular location is the cytoplasm. It catalyses the reaction [protein]-peptidylproline (omega=180) = [protein]-peptidylproline (omega=0). In terms of biological role, involved in protein export. Acts as a chaperone by maintaining the newly synthesized protein in an open conformation. Functions as a peptidyl-prolyl cis-trans isomerase. This chain is Trigger factor, found in Bacillus licheniformis (strain ATCC 14580 / DSM 13 / JCM 2505 / CCUG 7422 / NBRC 12200 / NCIMB 9375 / NCTC 10341 / NRRL NRS-1264 / Gibson 46).